The following is an 84-amino-acid chain: U4-theraphotoxin-Hhn1b (84 aa).

Positions Met-1–Ala-22 are cleaved as a signal peptide. A propeptide spanning residues Glu-23 to Arg-47 is cleaved from the precursor. Cystine bridges form between Cys-51-Cys-65, Cys-55-Cys-76, and Cys-70-Cys-81.

It belongs to the neurotoxin 12 (Hwtx-2) family. 02 (Hwtx-2) subfamily. As to expression, expressed by the venom gland.

It localises to the secreted. Postsynaptic neurotoxin. The sequence is that of U4-theraphotoxin-Hhn1b from Cyriopagopus hainanus (Chinese bird spider).